A 417-amino-acid polypeptide reads, in one-letter code: MAP kinase-interacting serine/threonine-protein kinase 1 (417 aa).

Residues 1 to 20 (MVSSQPVPIDDGGKRRKKKR) form a disordered region. Residues 37-321 (RLTDELLGEG…AAQVLQHPWL (285 aa)) enclose the Protein kinase domain. Residues 43 to 51 (LGEGAYAKV) and K66 contribute to the ATP site. The Proton acceptor role is filled by D158. The disordered stretch occupies residues 397–417 (AHARKGGSHLTHTTVTSQGAT). Residues 406–417 (LTHTTVTSQGAT) are compositionally biased toward polar residues.

It belongs to the protein kinase superfamily. CAMK Ser/Thr protein kinase family. Mg(2+) serves as cofactor.

It catalyses the reaction L-seryl-[protein] + ATP = O-phospho-L-seryl-[protein] + ADP + H(+). The enzyme catalyses L-threonyl-[protein] + ATP = O-phospho-L-threonyl-[protein] + ADP + H(+). Functionally, may play a role in the response to environmental stress and cytokines. Appears to regulate translation by phosphorylating EIF4E, thus increasing the affinity of this protein for the 7-methylguanosine-containing mRNA cap. This Xenopus tropicalis (Western clawed frog) protein is MAP kinase-interacting serine/threonine-protein kinase 1 (mknk1).